The primary structure comprises 221 residues: 7-cyano-7-deazaguanine synthase (221 aa).

Residue F10–L20 participates in ATP binding. Residues C186, C195, C198, and C201 each contribute to the Zn(2+) site.

This sequence belongs to the QueC family. As to quaternary structure, homodimer. Zn(2+) is required as a cofactor.

It catalyses the reaction 7-carboxy-7-deazaguanine + NH4(+) + ATP = 7-cyano-7-deazaguanine + ADP + phosphate + H2O + H(+). It participates in purine metabolism; 7-cyano-7-deazaguanine biosynthesis. In terms of biological role, catalyzes the ATP-dependent conversion of 7-carboxy-7-deazaguanine (CDG) to 7-cyano-7-deazaguanine (preQ(0)). The polypeptide is 7-cyano-7-deazaguanine synthase (Anoxybacillus flavithermus (strain DSM 21510 / WK1)).